The chain runs to 765 residues: Periplasmic beta-glucosidase (765 aa).

A signal peptide spans 1–20 (MKWLCSVGVAVSLAMQPALA). Residue Asp-287 is part of the active site.

This sequence belongs to the glycosyl hydrolase 3 family.

It localises to the periplasm. It carries out the reaction Hydrolysis of terminal, non-reducing beta-D-glucosyl residues with release of beta-D-glucose.. The polypeptide is Periplasmic beta-glucosidase (bglX) (Salmonella typhimurium (strain LT2 / SGSC1412 / ATCC 700720)).